The following is a 241-amino-acid chain: Phycocyanobilin:ferredoxin oxidoreductase (241 aa).

It belongs to the HY2 family.

It catalyses the reaction (2R,3Z)-phycocyanobilin + 4 oxidized [2Fe-2S]-[ferredoxin] = biliverdin IXalpha + 4 reduced [2Fe-2S]-[ferredoxin] + 4 H(+). Its function is as follows. Catalyzes the four-electron reduction of biliverdin IX-alpha (2-electron reduction at both the A and D rings); the reaction proceeds via an isolatable 2-electron intermediate, 181,182-dihydrobiliverdin. The polypeptide is Phycocyanobilin:ferredoxin oxidoreductase (Prochlorococcus marinus (strain MIT 9301)).